The following is a 482-amino-acid chain: 3-isopropylmalate dehydratase large subunit (482 aa).

Residues Cys-353, Cys-414, and Cys-417 each contribute to the [4Fe-4S] cluster site.

This sequence belongs to the aconitase/IPM isomerase family. LeuC type 1 subfamily. Heterodimer of LeuC and LeuD. Requires [4Fe-4S] cluster as cofactor.

The enzyme catalyses (2R,3S)-3-isopropylmalate = (2S)-2-isopropylmalate. Its pathway is amino-acid biosynthesis; L-leucine biosynthesis; L-leucine from 3-methyl-2-oxobutanoate: step 2/4. Catalyzes the isomerization between 2-isopropylmalate and 3-isopropylmalate, via the formation of 2-isopropylmaleate. This Xanthomonas oryzae pv. oryzae (strain MAFF 311018) protein is 3-isopropylmalate dehydratase large subunit.